We begin with the raw amino-acid sequence, 343 residues long: L-lysine cyclodeaminase (343 aa).

This sequence belongs to the ornithine cyclodeaminase/mu-crystallin family. The cofactor is NAD(+).

The enzyme catalyses L-lysine = L-pipecolate + NH4(+). It participates in antibiotic biosynthesis. Inhibited by nipecotic acid and thiazolidine-2-carboxylic acid. In terms of biological role, converts L-lysine to L-pipecolate, which is incorporated into multiple secondary metabolite products, including rapamycin, tobulysin, virginiamycin and pristinamycin. The sequence is that of L-lysine cyclodeaminase (rapL) from Streptomyces rapamycinicus (strain ATCC 29253 / DSM 41530 / NRRL 5491 / AYB-994) (Streptomyces hygroscopicus (strain ATCC 29253)).